The chain runs to 180 residues: Flavodoxin B (180 aa).

The 170-residue stretch at 4-173 folds into the Flavodoxin-like domain; the sequence is IGLFFGSNTG…RVAAWLAQIA (170 aa).

The protein belongs to the flavodoxin family. FMN serves as cofactor.

Its function is as follows. Low-potential electron donor to a number of redox enzymes. NifF is the electron donor to nitrogenase. This is Flavodoxin B (nifF) from Azotobacter chroococcum mcd 1.